An 801-amino-acid polypeptide reads, in one-letter code: Glycerol-3-phosphate acyltransferase 2, mitochondrial (801 aa).

The segment at 1-24 (METMLKSNPQMQQRNNHSGQETSL) is disordered. Residues 1–305 (METMLKSNPQ…PGPRLSALGQ (305 aa)) are Cytoplasmic-facing. An acyltransferase region spans residues 180–290 (QLHKGQMKMV…SGQPLLIFLE (111 aa)). Positions 205 to 210 (HKSLLD) match the HXXXXD motif motif. Residues 306–332 (AWLGLVVQAVQAGIVPDATLVPVATAY) traverse the membrane as a helical segment. Over 333–449 (DLVPDAPCNM…QLLVRRLSRH (117 aa)) the chain is Mitochondrial intermembrane. A helical membrane pass occupies residues 450–472 (VLSASVASSAVMSTAIMATLLLL). Over 473-795 (KHQKGVVLSQ…DNQDKLEQFI (323 aa)) the chain is Cytoplasmic.

The protein belongs to the GPAT/DAPAT family. Interacts with PIWIL2. As to expression, expressed in spermatocytes and spermatides.

The protein resides in the mitochondrion outer membrane. The catalysed reaction is sn-glycerol 3-phosphate + an acyl-CoA = a 1-acyl-sn-glycero-3-phosphate + CoA. It catalyses the reaction a 1-acyl-sn-glycero-3-phosphate + an acyl-CoA = a 1,2-diacyl-sn-glycero-3-phosphate + CoA. The enzyme catalyses 1-(9Z-octadecenoyl)-sn-glycero-3-phosphate + (9Z)-octadecenoyl-CoA = 1,2-di-(9Z-octadecenoyl)-sn-glycero-3-phosphate + CoA. It carries out the reaction 1-(9Z-octadecenoyl)-sn-glycero-3-phosphate + (5Z,8Z,11Z,14Z)-eicosatetraenoyl-CoA = 1-(9Z)-octadecenoyl-2-(5Z,8Z,11Z,14Z)-eicosatetraenoyl-sn-glycero-3-phosphate + CoA. The catalysed reaction is (5Z,8Z,11Z,14Z)-eicosatetraenoyl-CoA + sn-glycerol 3-phosphate = 1-(5Z,8Z,11Z,14Z-eicosatetraenoyl)-sn-glycero-3-phosphate + CoA. It functions in the pathway phospholipid metabolism; CDP-diacylglycerol biosynthesis; CDP-diacylglycerol from sn-glycerol 3-phosphate: step 1/3. Inhibited by N-ethylmaleimide (NEM). Transfers an acyl-group from acyl-ACP to the sn-1 position of glycerol-3-phosphate producing a lysophosphatidic acid (LPA), an essential step for the triacylglycerol (TAG) and glycerophospholipids. In vitro also transfers an acyl-group from acyl-ACP to the LPA producing a phosphatidic acid (PA). Prefers arachidonoyl-CoA as the acyl donor. Required for primary processing step during piRNA biosynthesis. Molecular mechanisms by which it promotes piRNA biosynthesis are unclear and do not involve its acyltransferase activity. The polypeptide is Glycerol-3-phosphate acyltransferase 2, mitochondrial (Rattus norvegicus (Rat)).